We begin with the raw amino-acid sequence, 595 residues long: Aspartate--tRNA(Asp/Asn) ligase (595 aa).

An L-aspartate-binding site is contributed by glutamate 175. The interval 199–202 (QQYK) is aspartate. Residues arginine 221 and histidine 454 each coordinate L-aspartate. 221 to 223 (RDE) lines the ATP pocket. Glutamate 488 contacts ATP. L-aspartate is bound at residue arginine 495. 540-543 (GIDR) contributes to the ATP binding site.

This sequence belongs to the class-II aminoacyl-tRNA synthetase family. Type 1 subfamily. As to quaternary structure, homodimer.

It localises to the cytoplasm. It carries out the reaction tRNA(Asx) + L-aspartate + ATP = L-aspartyl-tRNA(Asx) + AMP + diphosphate. Aspartyl-tRNA synthetase with relaxed tRNA specificity since it is able to aspartylate not only its cognate tRNA(Asp) but also tRNA(Asn). Reaction proceeds in two steps: L-aspartate is first activated by ATP to form Asp-AMP and then transferred to the acceptor end of tRNA(Asp/Asn). The protein is Aspartate--tRNA(Asp/Asn) ligase of Sinorhizobium fredii (strain NBRC 101917 / NGR234).